Reading from the N-terminus, the 346-residue chain is UDP-N-acetylenolpyruvoylglucosamine reductase (346 aa).

Positions 22–194 (GFDVRARFAC…TSVTFRLPKV (173 aa)) constitute an FAD-binding PCMH-type domain. Residue Arg170 is part of the active site. Ser246 serves as the catalytic Proton donor. Glu342 is a catalytic residue.

It belongs to the MurB family. FAD is required as a cofactor.

The protein localises to the cytoplasm. It carries out the reaction UDP-N-acetyl-alpha-D-muramate + NADP(+) = UDP-N-acetyl-3-O-(1-carboxyvinyl)-alpha-D-glucosamine + NADPH + H(+). Its pathway is cell wall biogenesis; peptidoglycan biosynthesis. Functionally, cell wall formation. The chain is UDP-N-acetylenolpyruvoylglucosamine reductase from Paraburkholderia xenovorans (strain LB400).